Consider the following 661-residue polypeptide: COBRA-like protein 7 (661 aa).

The signal sequence occupies residues 1–26 (MDSAPNFIPRLLLLSLLIVSIPLTSS). Residues 26–45 (SQSDANTTNPSPSPPSDSDL) form a disordered region. N-linked (GlcNAc...) asparagine glycans are attached at residues Asn-31, Asn-64, Asn-122, Asn-170, Asn-314, Asn-327, Asn-356, Asn-369, Asn-398, Asn-410, Asn-430, Asn-472, Asn-551, and Asn-561. Ser-637 carries GPI-anchor amidated serine lipidation. A propeptide spans 638 to 661 (SQHRKHISVFLLALPVLALLILRA) (removed in mature form).

The protein belongs to the COBRA family. In terms of tissue distribution, expressed in roots, stems, leaves, flowers and siliques.

It is found in the cell membrane. This chain is COBRA-like protein 7 (COBL7), found in Arabidopsis thaliana (Mouse-ear cress).